The primary structure comprises 452 residues: Mitochondrial import inner membrane translocase subunit TIM44 (452 aa).

Threonine 128 is modified (phosphothreonine). 166-173 provides a ligand contact to ATP; it reads SGEKLGKT. At lysine 177 the chain carries N6-succinyllysine. Residue serine 180 is modified to Phosphoserine. An N6-succinyllysine modification is found at lysine 217.

It belongs to the Tim44 family. In terms of assembly, probable component of the PAM complex at least composed of a mitochondrial HSP70 protein, GRPEL1 or GRPEL2, TIMM44, TIMM16/PAM16 and TIMM14/DNAJC19. The complex interacts with the TIMM23 component of the TIM23 complex. Interacts with SLC25A4/ANT1 and SLC25A5/ANT2; leading to inhibit the presequence translocase TIMM23, thereby promoting stabilization of PINK1.

It localises to the mitochondrion inner membrane. Functionally, essential component of the PAM complex, a complex required for the translocation of transit peptide-containing proteins from the inner membrane into the mitochondrial matrix in an ATP-dependent manner. Recruits mitochondrial HSP70 to drive protein translocation into the matrix using ATP as an energy source. This Mus musculus (Mouse) protein is Mitochondrial import inner membrane translocase subunit TIM44 (Timm44).